Consider the following 283-residue polypeptide: Nucleoid occlusion protein (283 aa).

A DNA-binding region (H-T-H motif) is located at residues 142 to 161 (ESLAQRLGKGQSTIANKLRL).

It belongs to the ParB family.

Its subcellular location is the cytoplasm. The protein localises to the nucleoid. In terms of biological role, effects nucleoid occlusion by binding relatively nonspecifically to DNA and preventing the assembly of the division machinery in the vicinity of the nucleoid, especially under conditions that disturb the cell cycle. It helps to coordinate cell division and chromosome segregation by preventing the formation of the Z ring through the nucleoid, which would cause chromosome breakage. This Shouchella clausii (strain KSM-K16) (Alkalihalobacillus clausii) protein is Nucleoid occlusion protein.